The chain runs to 115 residues: Large ribosomal subunit protein bL20 (115 aa).

Belongs to the bacterial ribosomal protein bL20 family.

Functionally, binds directly to 23S ribosomal RNA and is necessary for the in vitro assembly process of the 50S ribosomal subunit. It is not involved in the protein synthesizing functions of that subunit. The polypeptide is Large ribosomal subunit protein bL20 (Chlorobaculum parvum (strain DSM 263 / NCIMB 8327) (Chlorobium vibrioforme subsp. thiosulfatophilum)).